We begin with the raw amino-acid sequence, 328 residues long: GTPase Obg (328 aa).

Positions 2 to 160 (YNFKDSVNIT…LSVRLELFLV (159 aa)) constitute an Obg domain. Residues 161 to 326 (ADIGLVGLPN…LIKEFFILAK (166 aa)) enclose the OBG-type G domain. Residues 167 to 174 (GLPNAGKS), 192 to 196 (FTTKI), 213 to 216 (DIPG), 280 to 283 (NKLD), and 307 to 309 (SIY) each bind GTP. Mg(2+)-binding residues include Ser-174 and Thr-194.

The protein belongs to the TRAFAC class OBG-HflX-like GTPase superfamily. OBG GTPase family. As to quaternary structure, monomer. Requires Mg(2+) as cofactor.

The protein localises to the cytoplasm. In terms of biological role, an essential GTPase which binds GTP, GDP and possibly (p)ppGpp with moderate affinity, with high nucleotide exchange rates and a fairly low GTP hydrolysis rate. Plays a role in control of the cell cycle, stress response, ribosome biogenesis and in those bacteria that undergo differentiation, in morphogenesis control. The sequence is that of GTPase Obg from Borreliella burgdorferi (strain ATCC 35210 / DSM 4680 / CIP 102532 / B31) (Borrelia burgdorferi).